Consider the following 331-residue polypeptide: Glyceraldehyde-3-phosphate dehydrogenase (331 aa).

NAD(+) is bound by residues 12–13, D34, R78, and T120; that span reads RI. D-glyceraldehyde 3-phosphate contacts are provided by residues 149-151, T180, 209-210, and R232; these read SCT and TG. The Nucleophile role is filled by C150. N314 serves as a coordination point for NAD(+).

It belongs to the glyceraldehyde-3-phosphate dehydrogenase family. In terms of assembly, homotetramer.

It localises to the cytoplasm. It catalyses the reaction D-glyceraldehyde 3-phosphate + phosphate + NAD(+) = (2R)-3-phospho-glyceroyl phosphate + NADH + H(+). Its pathway is carbohydrate degradation; glycolysis; pyruvate from D-glyceraldehyde 3-phosphate: step 1/5. Catalyzes the oxidative phosphorylation of glyceraldehyde 3-phosphate (G3P) to 1,3-bisphosphoglycerate (BPG) using the cofactor NAD. The first reaction step involves the formation of a hemiacetal intermediate between G3P and a cysteine residue, and this hemiacetal intermediate is then oxidized to a thioester, with concomitant reduction of NAD to NADH. The reduced NADH is then exchanged with the second NAD, and the thioester is attacked by a nucleophilic inorganic phosphate to produce BPG. The chain is Glyceraldehyde-3-phosphate dehydrogenase (gapA) from Salmonella typhi.